A 306-amino-acid chain; its full sequence is UDP-3-O-acyl-N-acetylglucosamine deacetylase (306 aa).

3 residues coordinate Zn(2+): histidine 79, histidine 238, and aspartate 242. Residue histidine 265 is the Proton donor of the active site.

The protein belongs to the LpxC family. Zn(2+) is required as a cofactor.

The catalysed reaction is a UDP-3-O-[(3R)-3-hydroxyacyl]-N-acetyl-alpha-D-glucosamine + H2O = a UDP-3-O-[(3R)-3-hydroxyacyl]-alpha-D-glucosamine + acetate. It participates in glycolipid biosynthesis; lipid IV(A) biosynthesis; lipid IV(A) from (3R)-3-hydroxytetradecanoyl-[acyl-carrier-protein] and UDP-N-acetyl-alpha-D-glucosamine: step 2/6. Functionally, catalyzes the hydrolysis of UDP-3-O-myristoyl-N-acetylglucosamine to form UDP-3-O-myristoylglucosamine and acetate, the committed step in lipid A biosynthesis. This is UDP-3-O-acyl-N-acetylglucosamine deacetylase from Shewanella denitrificans (strain OS217 / ATCC BAA-1090 / DSM 15013).